The chain runs to 350 residues: uncharacterized protein (350 aa).

A run of 3 helical transmembrane segments spans residues 10–30, 51–71, and 327–347; these read YSFILCLAVGSVTIYTSEVIG, FAGILFTALVQLFSPTPVTLT, and ILSLFSVLFTCIVAGLFLKLF.

It belongs to the 1-acyl-sn-glycerol-3-phosphate acyltransferase family.

The protein resides in the endoplasmic reticulum membrane. This is an uncharacterized protein from Schizosaccharomyces pombe (strain 972 / ATCC 24843) (Fission yeast).